Consider the following 763-residue polypeptide: Forkhead box protein M1 (763 aa).

The tract at residues 1-53 is disordered; that stretch reads MKTSPRRPLILKRRRLPLPVQNAPSETSEEEPKRSPAQQESNQAEASKEVAES. The span at 36–45 shows a compositional bias: polar residues; the sequence is PAQQESNQAE. Residues lysine 163, lysine 201, and lysine 325 each participate in a glycyl lysine isopeptide (Lys-Gly) (interchain with G-Cter in SUMO2) cross-link. The segment at 198–232 is disordered; it reads RSIKQEMEEKENCHLEQRQVKVEEPSRPSASWQNS. Residues 200–223 show a composition bias toward basic and acidic residues; sequence IKQEMEEKENCHLEQRQVKVEEPS. A DNA-binding region (fork-head) is located at residues 235 to 327; that stretch reads ERPPYSYMAM…LTLDQVFKPL (93 aa). Residues 329-351 are disordered; the sequence is PGSPQLPEHLESQQKRPNPELRR. Serine 331 is modified (phosphoserine). Over residues 336–351 the composition is skewed to basic and acidic residues; the sequence is EHLESQQKRPNPELRR. Lysine 356 is covalently cross-linked (Glycyl lysine isopeptide (Lys-Gly) (interchain with G-Cter in SUMO2)). Position 376 is a phosphoserine; by CHEK2 (serine 376). Glycyl lysine isopeptide (Lys-Gly) (interchain with G-Cter in SUMO2) cross-links involve residues lysine 422 and lysine 440. A disordered region spans residues 482-711; the sequence is PPLEEWPSPA…PGSPEPQVSG (230 aa). Serine 489 bears the Phosphoserine; by GSK3 mark. The segment covering 494 to 503 has biased composition (basic and acidic residues); that stretch reads FKEESSHSWE. Serine 522 bears the Phosphoserine mark. The segment covering 583-592 has biased composition (polar residues); that stretch reads DPASQLSYSQ. Phosphothreonine; by CDK1 is present on threonine 611. Threonine 620, threonine 627, and threonine 662 each carry phosphothreonine. The residue at position 693 (serine 693) is a Phosphoserine; by CDK1. A phosphoserine; by PLK1 mark is found at serine 730 and serine 739.

In terms of assembly, interacts with PINT87aa which is encoded by the circular form of the long non-coding RNA LINC-PINT; the interaction inhibits FOXM1-mediated transcription of PHB2. In terms of processing, phosphorylated in M (mitotic) phase. Phosphorylation by the checkpoint kinase CHEK2 in response to DNA damage increases the FOXM1 protein stability probably stimulating the transcription of genes involved in DNA repair. Phosphorylated by CDK1 in late S and G2 phases, creating docking sites for the POLO box domains of PLK1. Subsequently, PLK1 binds and phosphorylates FOXM1, leading to activation of transcriptional activity and subsequent enhanced expression of key mitotic regulators. Phosphorylated by GSK3B leading to ubiquitination and proteasomal degradation. Post-translationally, ubiquitinated in a FBXW7-dependent manner leading to proteasomal degradation. In terms of tissue distribution, expressed in thymus, testis, small intestine, colon followed by ovary. Appears to be expressed only in adult organs containing proliferating/cycling cells or in response to growth factors. Also expressed in epithelial cell lines derived from tumors. Not expressed in resting cells. Isoform 2 is highly expressed in testis.

The protein localises to the nucleus. Transcription factor regulating the expression of cell cycle genes essential for DNA replication and mitosis. Plays a role in the control of cell proliferation. Also plays a role in DNA break repair, participating in the DNA damage checkpoint response. Promotes transcription of PHB2. In Homo sapiens (Human), this protein is Forkhead box protein M1 (FOXM1).